The following is a 190-amino-acid chain: NADH dehydrogenase [ubiquinone] iron-sulfur protein 3 (190 aa).

The protein belongs to the complex I 30 kDa subunit family. In terms of assembly, complex I is composed of at least 49 different subunits. This is a component of the iron-sulfur (IP) fragment of the enzyme.

It is found in the mitochondrion inner membrane. The enzyme catalyses a ubiquinone + NADH + 5 H(+)(in) = a ubiquinol + NAD(+) + 4 H(+)(out). In terms of biological role, core subunit of the mitochondrial membrane respiratory chain NADH dehydrogenase (Complex I) that is believed to belong to the minimal assembly required for catalysis. Complex I functions in the transfer of electrons from NADH to the respiratory chain. The immediate electron acceptor for the enzyme is believed to be ubiquinone. The protein is NADH dehydrogenase [ubiquinone] iron-sulfur protein 3 (NAD9) of Arabidopsis thaliana (Mouse-ear cress).